The following is a 553-amino-acid chain: uncharacterized protein (553 aa).

The first 28 residues, 1 to 28 (MRYARHASRYSLFTLAVSAALLPGAGWA), serve as a signal peptide directing secretion.

This is an uncharacterized protein from Pseudomonas aeruginosa (strain ATCC 15692 / DSM 22644 / CIP 104116 / JCM 14847 / LMG 12228 / 1C / PRS 101 / PAO1).